Reading from the N-terminus, the 453-residue chain is MEHVISMEEILGPFWELLPPPAPEPEREQPPVTGIVVGSVIDVAAAGHGDGDMMDQQHATEWTFERLLEEEALTTSTPPPVVVVPNSCCSGALNADRPPVMEEAVTMAPAAVSSAVVGDPMEYNAILRRKLEEDLEAFKMWRADSSVVTSDQRSQGSNNHTGGSSIRNNPVQNKLMNGEDPINNNHAQTAGLGVRLATSSSSRDPSPSDEDMDGEVEILGFKMPTEERVRKKESNRESARRSRYRKAAHLKELEDQVAQLKAENSCLLRRIAALNQKYNDANVDNRVLRADMETLRAKVKMGEDSLKRVIEMSSSVPSSMPISAPTPSSDAPVPPPPIRDSIVGYFSATAADDDASVGNGFLRLQAHQEPASMVVGGTLSATEMNRVAAATHCAGAMELIQTAMGSMPPTSASGSTPPPQIMSCWVQMGPYTWTCIRHCGFRDRWEHFICRRR.

The disordered stretch occupies residues 145 to 243 (SSVVTSDQRS…SNRESARRSR (99 aa)). Residues 146-175 (SVVTSDQRSQGSNNHTGGSSIRNNPVQNKL) are compositionally biased toward polar residues. Residues 207–216 (PSDEDMDGEV) show a composition bias toward acidic residues. The segment covering 224–240 (PTEERVRKKESNRESAR) has biased composition (basic and acidic residues). Positions 225 to 288 (TEERVRKKES…NDANVDNRVL (64 aa)) constitute a bZIP domain. The basic motif stretch occupies residues 228–251 (RVRKKESNRESARRSRYRKAAHLK). The segment at 253–274 (LEDQVAQLKAENSCLLRRIAAL) is leucine-zipper.

This sequence belongs to the bZIP family. As to quaternary structure, interacts with the Dof zinc finger protein PBF. In terms of tissue distribution, seed endosperm.

The protein resides in the nucleus. Involved in the regulation of the endosperm-specific production of albumin b-32 and other zein proteins. It is a trans-acting transcriptional activator that binds to the consensus sequence 5'-GATGAYRTGR-3'. This Zea mays (Maize) protein is Regulatory protein opaque-2 (O2).